The following is a 299-amino-acid chain: Tyrosine recombinase XerD (299 aa).

One can recognise a Core-binding (CB) domain in the interval 2 to 89 (ETVNNNLQQF…AIRSFHQFLL (88 aa)). Residues 110–293 (RLPKALTIEE…TKTRMRDVYA (184 aa)) enclose the Tyr recombinase domain. Active-site residues include Arg150, Lys174, His245, Arg248, and His271. The active-site O-(3'-phospho-DNA)-tyrosine intermediate is the Tyr280.

The protein belongs to the 'phage' integrase family. XerD subfamily. As to quaternary structure, forms a cyclic heterotetrameric complex composed of two molecules of XerC and two molecules of XerD.

The protein localises to the cytoplasm. Functionally, site-specific tyrosine recombinase, which acts by catalyzing the cutting and rejoining of the recombining DNA molecules. The XerC-XerD complex is essential to convert dimers of the bacterial chromosome into monomers to permit their segregation at cell division. It also contributes to the segregational stability of plasmids. This Halalkalibacterium halodurans (strain ATCC BAA-125 / DSM 18197 / FERM 7344 / JCM 9153 / C-125) (Bacillus halodurans) protein is Tyrosine recombinase XerD.